A 339-amino-acid polypeptide reads, in one-letter code: Serpentine receptor class alpha-22 (339 aa).

The next 6 membrane-spanning stretches (helical) occupy residues Ile-33 to Leu-53, Val-110 to Leu-130, Phe-150 to Ala-170, Val-199 to Val-219, Ile-250 to Leu-270, and Ile-284 to Phe-304.

The protein belongs to the nematode receptor-like protein sra family.

It localises to the membrane. This chain is Serpentine receptor class alpha-22 (sra-22), found in Caenorhabditis elegans.